The sequence spans 335 residues: Phosphate acyltransferase (335 aa).

This sequence belongs to the PlsX family. Homodimer. Probably interacts with PlsY.

Its subcellular location is the cytoplasm. The catalysed reaction is a fatty acyl-[ACP] + phosphate = an acyl phosphate + holo-[ACP]. The protein operates within lipid metabolism; phospholipid metabolism. In terms of biological role, catalyzes the reversible formation of acyl-phosphate (acyl-PO(4)) from acyl-[acyl-carrier-protein] (acyl-ACP). This enzyme utilizes acyl-ACP as fatty acyl donor, but not acyl-CoA. The chain is Phosphate acyltransferase from Streptococcus uberis (strain ATCC BAA-854 / 0140J).